The sequence spans 393 residues: Protein phosphatase 2C homolog 4 (393 aa).

The PPM-type phosphatase domain maps to 33–368 (YNCVGSMQGY…DNMTAIIVVL (336 aa)). Mn(2+) contacts are provided by aspartate 83, glycine 84, aspartate 310, and aspartate 359.

The protein belongs to the PP2C family. The cofactor is Mg(2+). Requires Mn(2+) as cofactor.

The catalysed reaction is O-phospho-L-seryl-[protein] + H2O = L-seryl-[protein] + phosphate. It catalyses the reaction O-phospho-L-threonyl-[protein] + H2O = L-threonyl-[protein] + phosphate. The sequence is that of Protein phosphatase 2C homolog 4 (PTC4) from Saccharomyces cerevisiae (strain ATCC 204508 / S288c) (Baker's yeast).